The sequence spans 230 residues: Large ribosomal subunit protein uL1 (230 aa).

The protein belongs to the universal ribosomal protein uL1 family. As to quaternary structure, part of the 50S ribosomal subunit.

In terms of biological role, binds directly to 23S rRNA. The L1 stalk is quite mobile in the ribosome, and is involved in E site tRNA release. Protein L1 is also a translational repressor protein, it controls the translation of the L11 operon by binding to its mRNA. This Bacillus cereus (strain B4264) protein is Large ribosomal subunit protein uL1.